The following is a 188-amino-acid chain: Ribosome-recycling factor (188 aa).

Belongs to the RRF family.

It is found in the cytoplasm. Responsible for the release of ribosomes from messenger RNA at the termination of protein biosynthesis. May increase the efficiency of translation by recycling ribosomes from one round of translation to another. The polypeptide is Ribosome-recycling factor (Gluconobacter oxydans (strain 621H) (Gluconobacter suboxydans)).